The primary structure comprises 314 residues: tRNA-cytidine(32) 2-sulfurtransferase (314 aa).

The PP-loop motif signature appears at 46 to 51 (SGGKDS). The [4Fe-4S] cluster site is built by Cys-121, Cys-124, and Cys-212.

This sequence belongs to the TtcA family. As to quaternary structure, homodimer. The cofactor is Mg(2+). [4Fe-4S] cluster serves as cofactor.

It is found in the cytoplasm. It carries out the reaction cytidine(32) in tRNA + S-sulfanyl-L-cysteinyl-[cysteine desulfurase] + AH2 + ATP = 2-thiocytidine(32) in tRNA + L-cysteinyl-[cysteine desulfurase] + A + AMP + diphosphate + H(+). Its pathway is tRNA modification. Functionally, catalyzes the ATP-dependent 2-thiolation of cytidine in position 32 of tRNA, to form 2-thiocytidine (s(2)C32). The sulfur atoms are provided by the cysteine/cysteine desulfurase (IscS) system. The sequence is that of tRNA-cytidine(32) 2-sulfurtransferase from Nitrosomonas europaea (strain ATCC 19718 / CIP 103999 / KCTC 2705 / NBRC 14298).